Here is a 253-residue protein sequence, read N- to C-terminus: Glucosamine-6-phosphate deaminase (253 aa).

Aspartate 65 functions as the Proton acceptor; for enolization step in the catalytic mechanism. Asparagine 133 functions as the For ring-opening step in the catalytic mechanism. The active-site Proton acceptor; for ring-opening step is the histidine 135. Glutamate 140 serves as the catalytic For ring-opening step.

Belongs to the glucosamine/galactosamine-6-phosphate isomerase family. NagB subfamily.

The enzyme catalyses alpha-D-glucosamine 6-phosphate + H2O = beta-D-fructose 6-phosphate + NH4(+). It functions in the pathway amino-sugar metabolism; N-acetylneuraminate degradation; D-fructose 6-phosphate from N-acetylneuraminate: step 5/5. Its function is as follows. Catalyzes the reversible isomerization-deamination of glucosamine 6-phosphate (GlcN6P) to form fructose 6-phosphate (Fru6P) and ammonium ion. This is Glucosamine-6-phosphate deaminase from Corynebacterium glutamicum (strain ATCC 13032 / DSM 20300 / JCM 1318 / BCRC 11384 / CCUG 27702 / LMG 3730 / NBRC 12168 / NCIMB 10025 / NRRL B-2784 / 534).